The sequence spans 583 residues: Putative ABC transporter ATP-binding protein exp8 (583 aa).

The 284-residue stretch at 25–308 (TFLALSFLLA…VTQNFSTLQT (284 aa)) folds into the ABC transmembrane type-1 domain. Transmembrane regions (helical) follow at residues 26–46 (FLALSFLLATTVIKSVIPLVA), 61–81 (AVTVLLVYYGLYILQTVVQYV), 135–155 (MFSGILSSFISAVFIFLTTLY), 159–179 (VLDFRLTALVLLFLPLIFLLV), and 259–279 (LGYAVLMAYFGYRGFSIGITV). Residues 341-574 (IRFEHVCFSY…GGTYHKMYSL (234 aa)) enclose the ABC transporter domain. 374–381 (GHTGSGKS) contributes to the ATP binding site.

Belongs to the ABC transporter superfamily.

The protein resides in the cell membrane. The chain is Putative ABC transporter ATP-binding protein exp8 (exp8) from Streptococcus pneumoniae serotype 4 (strain ATCC BAA-334 / TIGR4).